The primary structure comprises 327 residues: uncharacterized protein (327 aa).

Residues 1-17 (MASMAAAIAASRSAVMS) show a composition bias toward low complexity. The tract at residues 1-22 (MASMAAAIAASRSAVMSGNRPL) is disordered. An N-acetylalanine modification is found at A2. Residue S37 is modified to Phosphoserine. The interval 76–113 (GPRAPAPRDPGDSEELTRFPGLRGPTGQKVVRFGDEDL) is disordered. Position 129 is a phosphoserine (S129). Residues 134-148 (SISALSIQEPSNGTA) show a composition bias toward polar residues. The disordered stretch occupies residues 134-299 (SISALSIQEP…PDVRQDDGED (166 aa)). Low complexity predominate over residues 162-176 (SQALKSSQGSRSSSL). S175 carries the post-translational modification Phosphoserine. 2 stretches are compositionally biased toward basic and acidic residues: residues 182–202 (TRKE…RGEG) and 233–252 (PAPK…RQEQ). S289 carries the post-translational modification Phosphoserine.

The protein localises to the cytoplasm. This is an uncharacterized protein from Homo sapiens (Human).